The chain runs to 400 residues: Tyrosine-specific transport system 1 (400 aa).

12 helical membrane-spanning segments follow: residues 5-25 (VGSTLLVAGTMIGAGMLAMPL), 34-54 (FTLVLLLGLWALLTFSALLFV), 80-100 (IIATAVLIIFLYALIAAYISG), 117-137 (VSVLLFTVIFGSFIVIGTHSV), 143-163 (VLFFVMLAAFAVVLSLMLPEI), 176-196 (ALIISASPVFFTAFGFHGSIP), 211-231 (FSILVGSAITLCAYILWQLST), 250-270 (LNGLVKATFAITGSNVIASAV), 273-293 (FSTLALITSFLGVGLGLLECI), 313-333 (LTFIPPLVFALFYPEGFILAL), 335-355 (YAGQMFAFYAVVLPVSLVWKA), and 370-390 (NLTLIIVLVLGVLITSIPFAI).

This sequence belongs to the amino acid/polyamine transporter 2 family. Mtr/TnaB/TyrP permease subfamily.

It localises to the cell inner membrane. The catalysed reaction is L-tyrosine(in) + H(+)(in) = L-tyrosine(out) + H(+)(out). Transports tyrosine across the cytoplasmic membrane. The transport system is energized by the proton motive force. This is Tyrosine-specific transport system 1 (tyrP-A) from Haemophilus influenzae (strain ATCC 51907 / DSM 11121 / KW20 / Rd).